A 92-amino-acid chain; its full sequence is uncharacterized protein (92 aa).

This is an uncharacterized protein from Escherichia coli (strain K12).